A 254-amino-acid polypeptide reads, in one-letter code: Nickel import ATP-binding protein NikD (254 aa).

One can recognise an ABC transporter domain in the interval 2-241 (PQQIELRNIA…PKHTVTRSLV (240 aa)). 36–43 (GGSGSGKS) serves as a coordination point for ATP.

It belongs to the ABC transporter superfamily. Nickel importer (TC 3.A.1.5.3) family. The complex is composed of two ATP-binding proteins (NikD and NikE), two transmembrane proteins (NikB and NikC) and a solute-binding protein (NikA).

It is found in the cell inner membrane. It carries out the reaction Ni(2+)(out) + ATP + H2O = Ni(2+)(in) + ADP + phosphate + H(+). In terms of biological role, part of the ABC transporter complex NikABCDE involved in nickel import. Responsible for energy coupling to the transport system. This Shigella flexneri serotype 5b (strain 8401) protein is Nickel import ATP-binding protein NikD.